The primary structure comprises 457 residues: tRNA modification GTPase MnmE (457 aa).

Residues R22, E86, and R125 each coordinate (6S)-5-formyl-5,6,7,8-tetrahydrofolate. A TrmE-type G domain is found at 221 to 381 (GLRAVLAGRP…LEAEVARVAG (161 aa)). Position 231 (N231) interacts with K(+). GTP-binding positions include 231–236 (NVGKSS), 250–256 (TPIPGTT), and 275–278 (DTAG). S235 contributes to the Mg(2+) binding site. K(+)-binding residues include T250, I252, and T255. Position 256 (T256) interacts with Mg(2+). A (6S)-5-formyl-5,6,7,8-tetrahydrofolate-binding site is contributed by K457.

It belongs to the TRAFAC class TrmE-Era-EngA-EngB-Septin-like GTPase superfamily. TrmE GTPase family. In terms of assembly, homodimer. Heterotetramer of two MnmE and two MnmG subunits. Requires K(+) as cofactor.

Its subcellular location is the cytoplasm. Functionally, exhibits a very high intrinsic GTPase hydrolysis rate. Involved in the addition of a carboxymethylaminomethyl (cmnm) group at the wobble position (U34) of certain tRNAs, forming tRNA-cmnm(5)s(2)U34. This Symbiobacterium thermophilum (strain DSM 24528 / JCM 14929 / IAM 14863 / T) protein is tRNA modification GTPase MnmE.